We begin with the raw amino-acid sequence, 499 residues long: Bestrophin homolog 22 (499 aa).

4 helical membrane-spanning segments follow: residues 29–49 (WKAVFGQLAVWTAVFLLISCI), 77–97 (IPLTFLLGFFVSFVVARWGSI), 235–255 (LVYPQVIFLAVRIYFMICLIG), and 267–287 (GIDLWLPITTMVQFLVYMGWM). A compositionally biased stretch (basic and acidic residues) spans 417–432 (HNAKHAKQRGLERANS). Disordered regions lie at residues 417-455 (HNAKHAKQRGLERANSPDKCLSKMRSRSNGKFRTSANGS) and 474-499 (TSNPNQVHPHSIAVFPPEEQQTTSRH).

It belongs to the anion channel-forming bestrophin (TC 1.A.46) family. Calcium-sensitive chloride channel subfamily. In terms of assembly, forms oligomers.

The protein resides in the cell membrane. Forms chloride channels. This chain is Bestrophin homolog 22 (best-22), found in Caenorhabditis elegans.